The following is a 154-amino-acid chain: Cytochrome c' (154 aa).

Residues 1–23 (MKHVLASTAAGLMALGLASSAIA) form the signal peptide. Heme c is bound by residues arginine 35, glutamine 36, arginine 95, cysteine 144, cysteine 147, and histidine 148.

Homodimer. Post-translationally, binds 1 heme c group covalently per subunit.

Its function is as follows. Cytochrome c' is the most widely occurring bacterial c-type cytochrome. Cytochromes c' are high-spin proteins and the heme has no sixth ligand. Their exact function is not known. This chain is Cytochrome c' (cycA), found in Allochromatium vinosum (strain ATCC 17899 / DSM 180 / NBRC 103801 / NCIMB 10441 / D) (Chromatium vinosum).